A 332-amino-acid polypeptide reads, in one-letter code: Small ribosomal subunit protein uS2 (332 aa).

This sequence belongs to the universal ribosomal protein uS2 family.

In Afipia carboxidovorans (strain ATCC 49405 / DSM 1227 / KCTC 32145 / OM5) (Oligotropha carboxidovorans), this protein is Small ribosomal subunit protein uS2.